The primary structure comprises 117 residues: Large ribosomal subunit protein uL18 (117 aa).

It belongs to the universal ribosomal protein uL18 family. Part of the 50S ribosomal subunit; part of the 5S rRNA/L5/L18/L25 subcomplex. Contacts the 5S and 23S rRNAs.

This is one of the proteins that bind and probably mediate the attachment of the 5S RNA into the large ribosomal subunit, where it forms part of the central protuberance. In Pectobacterium atrosepticum (strain SCRI 1043 / ATCC BAA-672) (Erwinia carotovora subsp. atroseptica), this protein is Large ribosomal subunit protein uL18.